Here is a 403-residue protein sequence, read N- to C-terminus: Cystinosin homolog (403 aa).

Over 1-122 the chain is Lumenal; it reads MKLPVSILFF…YSRITVIRSH (122 aa). N-linked (GlcNAc...) asparagine glycans are attached at residues Asn45, Asn52, Asn78, and Asn96. A helical membrane pass occupies residues 123 to 143; sequence WLAILIQIVGWTYFAAWSVSF. Residues 124–190 enclose the PQ-loop 1 domain; the sequence is LAILIQIVGW…MYYNSHVKNI (67 aa). Residues 144–162 are Cytoplasmic-facing; that stretch reads YPQMYLNFKRKSVVGLNFD. A helical membrane pass occupies residues 163–183; that stretch reads FLSLNLVGFGAYAMFNLLMYY. The Lumenal segment spans residues 184–206; that stretch reads NSHVKNIYSMENPRSPPPVLLND. A helical membrane pass occupies residues 207 to 227; the sequence is VVFAVHAFLACFVTILQCIFY. Topologically, residues 228 to 237 are cytoplasmic; it reads ERDQQRISTK. Residues 238 to 258 traverse the membrane as a helical segment; that stretch reads CIILIIGLVSFGFVSVVVTVL. The Lumenal portion of the chain corresponds to 259–260; that stretch reads NK. A helical membrane pass occupies residues 261–283; sequence ITILDFVVSLSYIKMAVTCCKYF. The region spanning 266-326 is the PQ-loop 2 domain; sequence FVVSLSYIKM…MVLQAINVND (61 aa). Residues 284-294 are Cytoplasmic-facing; the sequence is PQAYFNYQRKS. The chain crosses the membrane as a helical span at residues 295–315; it reads TVGWSIGNILLDFTGGSLDIL. Residues 316-336 lie on the Lumenal side of the membrane; it reads QMVLQAINVNDWSAFYANPVK. Residues 337-357 traverse the membrane as a helical segment; that stretch reads FGLGFVSIFFDIIFMIQHYAL. Residues 358 to 403 are Cytoplasmic-facing; that stretch reads YPDAEVPHNEYHGVDNPDPDSIVRDAEHGAADNESMESTDPIIVHD. Residues 374 to 388 show a composition bias toward basic and acidic residues; the sequence is PDPDSIVRDAEHGAA. The tract at residues 374–403 is disordered; sequence PDPDSIVRDAEHGAADNESMESTDPIIVHD.

This sequence belongs to the cystinosin family.

The protein resides in the lysosome membrane. Its subcellular location is the cytoplasmic vesicle. It is found in the phagosome. The catalysed reaction is L-cystine(out) + H(+)(out) = L-cystine(in) + H(+)(in). Cystine/H(+) symporter that mediates export of cystine, the oxidized dimer of cysteine, from lysosomes. May play a role in the degradation of engulfed apoptotic cells. This chain is Cystinosin homolog (ctns-1), found in Caenorhabditis briggsae.